Here is a 135-residue protein sequence, read N- to C-terminus: uncharacterized protein (135 aa).

The next 2 membrane-spanning stretches (helical) occupy residues 20-40 (IFSF…NTKL) and 47-67 (IAYF…IHGT).

This sequence belongs to the plectrovirus ORF5 family.

The protein localises to the host membrane. This is an uncharacterized protein from Spiroplasma virus SpV1-C74 (SpV1).